An 85-amino-acid chain; its full sequence is Arminin 6494 (85 aa).

An N-terminal signal peptide occupies residues 1–18 (MKTVFAILFLAFIALTYA). Positions 19–57 (RSYEDVKEEIKNEVEKEILEDLEEESDELNDKRKEINDA) are excised as a propeptide. Residue Ala82 is modified to Alanine amide.

It belongs to the arminin family. Expressed in entodermal epithelium along the body column.

Its subcellular location is the secreted. The protein resides in the target cell membrane. In terms of biological role, antimicrobial peptide with a broad-spectrum antimicrobial activity. Keeps its antibacterial activity under a wide range of salt concentrations that mimic physiological conditions of human blood, which is surprising, since Hydra is an obligate freshwater animal with nearly no salt tolerance. Does not affect red blood cells. In Hydra vulgaris (Hydra), this protein is Arminin 6494.